The primary structure comprises 215 residues: Ribose-5-phosphate isomerase A (215 aa).

Residues 26–29 (TGST), 79–82 (DGAD), and 92–95 (KGGG) contribute to the substrate site. Glu101 (proton acceptor) is an active-site residue. Position 119 (Lys119) interacts with substrate.

This sequence belongs to the ribose 5-phosphate isomerase family. Homodimer.

The enzyme catalyses aldehydo-D-ribose 5-phosphate = D-ribulose 5-phosphate. The protein operates within carbohydrate degradation; pentose phosphate pathway; D-ribose 5-phosphate from D-ribulose 5-phosphate (non-oxidative stage): step 1/1. Functionally, catalyzes the reversible conversion of ribose-5-phosphate to ribulose 5-phosphate. This is Ribose-5-phosphate isomerase A from Xanthomonas campestris pv. campestris (strain 8004).